The primary structure comprises 68 residues: Protein transport protein Sec61 subunit gamma (68 aa).

Position 1 is an N-acetylmethionine (Met-1). Topologically, residues 1-32 are cytoplasmic; that stretch reads MDQVMQFVEPSRQFVKDSIRLVKRCTKPDRKE. Ser-18 carries the post-translational modification Phosphoserine. The helical transmembrane segment at 33–61 threads the bilayer; that stretch reads FQKIAMATAIGFAIMGFIGFFVKLIHIPI. Over 62–68 the chain is Extracellular; the sequence is NNIIVGG.

It belongs to the SecE/SEC61-gamma family. In terms of assembly, the SEC61 channel-forming translocon complex consists of channel-forming core components SEC61A1, SEC61B and SEC61G and different auxiliary components such as SEC62 and SEC63. The SEC61 channel associates with the multi-pass translocon (MPT) complex.

Its subcellular location is the endoplasmic reticulum membrane. Component of SEC61 channel-forming translocon complex that mediates transport of signal peptide-containing precursor polypeptides across the endoplasmic reticulum (ER). Forms a ribosome receptor and a gated pore in the ER membrane, both functions required for cotranslational translocation of nascent polypeptides. The SEC61 channel is also involved in ER membrane insertion of transmembrane proteins: it mediates membrane insertion of the first few transmembrane segments of proteins, while insertion of subsequent transmembrane regions of multi-pass membrane proteins is mediated by the multi-pass translocon (MPT) complex. The SEC61 channel cooperates with the translocating protein TRAM1 to import nascent proteins into the ER. This chain is Protein transport protein Sec61 subunit gamma (SEC61G), found in Bos taurus (Bovine).